We begin with the raw amino-acid sequence, 219 residues long: Mediator of RNA polymerase II transcription subunit 18 (219 aa).

The protein belongs to the Mediator complex subunit 18 family. In terms of assembly, component of the Mediator complex. Interacts with YY1 to suppress disease susceptibility via the repression of genes glutaredoxins GRX480, GRXS13 and thioredoxin TRX-h5. Binds to ABI4 to regulate abscisic acid responses; recruited by ABI4 to ABI5 promoter in the presence of abscisic acid (ABA). Interacts with SUF4 to regulate flowering time; recruited by SUF4 to FLC promoter.

The protein localises to the nucleus. In terms of biological role, component of the Mediator complex, a coactivator involved in the regulated transcription of nearly all RNA polymerase II-dependent genes. Mediator functions as a bridge to convey information from gene-specific regulatory proteins to the basal RNA polymerase II transcription machinery. The Mediator complex, having a compact conformation in its free form, is recruited to promoters by direct interactions with regulatory proteins and serves for the assembly of a functional pre-initiation complex with RNA polymerase II and the general transcription factors. Involved in the regulation of histone H3 lysine tri-methylation (H3K36me3). Associates with the promoter, coding and terminator regions of target genes suggesting its function in transcription initiation, elongation and termination. Multifunctional protein which regulates plant immunity, especially during necrotrophic fungal infection (e.g. B.cinerea and A.brassicicola), flowering time and responses to hormones (e.g. abscisic acid ABA and ethylene) through interactions with distinct transcription factors. In Arabidopsis thaliana (Mouse-ear cress), this protein is Mediator of RNA polymerase II transcription subunit 18.